The following is a 185-amino-acid chain: Hypoxanthine/guanine phosphoribosyltransferase (185 aa).

The protein belongs to the purine/pyrimidine phosphoribosyltransferase family. Archaeal HPRT subfamily. As to quaternary structure, homodimer.

It is found in the cytoplasm. The enzyme catalyses IMP + diphosphate = hypoxanthine + 5-phospho-alpha-D-ribose 1-diphosphate. The catalysed reaction is GMP + diphosphate = guanine + 5-phospho-alpha-D-ribose 1-diphosphate. The protein operates within purine metabolism; IMP biosynthesis via salvage pathway; IMP from hypoxanthine: step 1/1. Functionally, catalyzes a salvage reaction resulting in the formation of IMP that is energically less costly than de novo synthesis. This is Hypoxanthine/guanine phosphoribosyltransferase (hpt) from Methanococcus maripaludis (strain DSM 14266 / JCM 13030 / NBRC 101832 / S2 / LL).